The sequence spans 433 residues: FAD-dependent monooxygenase notI' (433 aa).

The FAD site is built by Glu-45 and Arg-117. Arg-195 is a catalytic residue. Positions 314 and 327 each coordinate FAD.

The protein belongs to the paxM FAD-dependent monooxygenase family. Requires FAD as cofactor.

The protein operates within alkaloid biosynthesis. Functionally, FAD-dependent monooxygenase; part of the gene cluster that mediates the biosynthesis of notoamide, a fungal indole alkaloid that belongs to a family of natural products containing a characteristic bicyclo[2.2.2]diazaoctane core. The first step of notoamide biosynthesis involves coupling of L-proline and L-tryptophan by the bimodular NRPS notE', to produce cyclo-L-tryptophan-L-proline called brevianamide F. The reverse prenyltransferase notF' then acts as a deoxybrevianamide E synthase and converts brevianamide F to deoxybrevianamide E via reverse prenylation at C-2 of the indole ring leading to the bicyclo[2.2.2]diazaoctane core. Deoxybrevianamide E is further hydroxylated at C-6 of the indole ring, likely catalyzed by the cytochrome P450 monooxygenase notG', to yield 6-hydroxy-deoxybrevianamide E. 6-hydroxy-deoxybrevianamide E is a specific substrate of the prenyltransferase notC' for normal prenylation at C-7 to produce 6-hydroxy-7-prenyl-deoxybrevianamide, also called notoamide S. As the proposed pivotal branching point in notoamide biosynthesis, notoamide S can be diverted to notoamide E through an oxidative pyran ring closure putatively catalyzed by either notH' cytochrome P450 monooxygenase or the notD' FAD-linked oxidoreductase. This step would be followed by an indole 2,3-epoxidation-initiated pinacol-like rearrangement catalyzed by the notB' FAD-dependent monooxygenase leading to the formation of notoamide C and notoamide D. On the other hand notoamide S is converted to notoamide T by notH' (or notD'), a bifunctional oxidase that also functions as the intramolecular Diels-Alderase responsible for generation of (-)-notoamide T. To generate antipodal (+)-notoaminide T, notH (or notD) in Aspergillus strain MF297-2 is expected to catalyze a Diels-Alder reaction leading to the opposite stereochemistry. The remaining oxidoreductase notD' (or notH') likely catalyzes the oxidative pyran ring formation to yield (-)-stephacidin A. The FAD-dependent monooxygenase notI' is highly similar to notB' and is predicted to catalyze a similar conversion from (-)-stephacidin A to (+)-notoamide B via the 2,3-epoxidation of (-)-stephacidin A followed by a pinacol-type rearrangement. Finally, it remains unclear which enzyme could be responsible for the final hydroxylation steps leading to notoamide A and sclerotiamide. In Aspergillus versicolor, this protein is FAD-dependent monooxygenase notI'.